Here is a 260-residue protein sequence, read N- to C-terminus: NH(3)-dependent NAD(+) synthetase (260 aa).

An ATP-binding site is contributed by 31–38 (GLSGGLDS). Asp37 is a Mg(2+) binding site. Arg112 lines the deamido-NAD(+) pocket. Thr132 provides a ligand contact to ATP. Glu137 contacts Mg(2+). Residues Lys161 and Ser183 each coordinate ATP.

The protein belongs to the NAD synthetase family. Homodimer.

It carries out the reaction deamido-NAD(+) + NH4(+) + ATP = AMP + diphosphate + NAD(+) + H(+). The protein operates within cofactor biosynthesis; NAD(+) biosynthesis; NAD(+) from deamido-NAD(+) (ammonia route): step 1/1. Functionally, catalyzes the ATP-dependent amidation of deamido-NAD to form NAD. Uses ammonia as a nitrogen source. This Helicobacter pylori (strain G27) protein is NH(3)-dependent NAD(+) synthetase.